The primary structure comprises 334 residues: Holliday junction branch migration complex subunit RuvB (334 aa).

The large ATPase domain (RuvB-L) stretch occupies residues methionine 1–tyrosine 182. Residues leucine 21, arginine 22, glycine 63, lysine 66, threonine 67, threonine 68, glutamate 129 to phenylalanine 131, arginine 172, tyrosine 182, and arginine 219 contribute to the ATP site. Threonine 67 contacts Mg(2+). Positions asparagine 183–glutamine 253 are small ATPAse domain (RuvB-S). The segment at glutamine 256–glutamate 334 is head domain (RuvB-H). Residues arginine 292, arginine 311, and arginine 316 each contribute to the DNA site.

This sequence belongs to the RuvB family. As to quaternary structure, homohexamer. Forms an RuvA(8)-RuvB(12)-Holliday junction (HJ) complex. HJ DNA is sandwiched between 2 RuvA tetramers; dsDNA enters through RuvA and exits via RuvB. An RuvB hexamer assembles on each DNA strand where it exits the tetramer. Each RuvB hexamer is contacted by two RuvA subunits (via domain III) on 2 adjacent RuvB subunits; this complex drives branch migration. In the full resolvosome a probable DNA-RuvA(4)-RuvB(12)-RuvC(2) complex forms which resolves the HJ.

The protein resides in the cytoplasm. The enzyme catalyses ATP + H2O = ADP + phosphate + H(+). Functionally, the RuvA-RuvB-RuvC complex processes Holliday junction (HJ) DNA during genetic recombination and DNA repair, while the RuvA-RuvB complex plays an important role in the rescue of blocked DNA replication forks via replication fork reversal (RFR). RuvA specifically binds to HJ cruciform DNA, conferring on it an open structure. The RuvB hexamer acts as an ATP-dependent pump, pulling dsDNA into and through the RuvAB complex. RuvB forms 2 homohexamers on either side of HJ DNA bound by 1 or 2 RuvA tetramers; 4 subunits per hexamer contact DNA at a time. Coordinated motions by a converter formed by DNA-disengaged RuvB subunits stimulates ATP hydrolysis and nucleotide exchange. Immobilization of the converter enables RuvB to convert the ATP-contained energy into a lever motion, pulling 2 nucleotides of DNA out of the RuvA tetramer per ATP hydrolyzed, thus driving DNA branch migration. The RuvB motors rotate together with the DNA substrate, which together with the progressing nucleotide cycle form the mechanistic basis for DNA recombination by continuous HJ branch migration. Branch migration allows RuvC to scan DNA until it finds its consensus sequence, where it cleaves and resolves cruciform DNA. The chain is Holliday junction branch migration complex subunit RuvB from Staphylococcus epidermidis (strain ATCC 35984 / DSM 28319 / BCRC 17069 / CCUG 31568 / BM 3577 / RP62A).